The chain runs to 426 residues: 4-hydroxy-3-methylbut-2-en-1-yl diphosphate synthase (flavodoxin) (426 aa).

Cys-310, Cys-313, Cys-356, and Glu-363 together coordinate [4Fe-4S] cluster.

The protein belongs to the IspG family. It depends on [4Fe-4S] cluster as a cofactor.

The enzyme catalyses (2E)-4-hydroxy-3-methylbut-2-enyl diphosphate + oxidized [flavodoxin] + H2O + 2 H(+) = 2-C-methyl-D-erythritol 2,4-cyclic diphosphate + reduced [flavodoxin]. It participates in isoprenoid biosynthesis; isopentenyl diphosphate biosynthesis via DXP pathway; isopentenyl diphosphate from 1-deoxy-D-xylulose 5-phosphate: step 5/6. In terms of biological role, converts 2C-methyl-D-erythritol 2,4-cyclodiphosphate (ME-2,4cPP) into 1-hydroxy-2-methyl-2-(E)-butenyl 4-diphosphate. The sequence is that of 4-hydroxy-3-methylbut-2-en-1-yl diphosphate synthase (flavodoxin) from Rhodopseudomonas palustris (strain BisA53).